Consider the following 405-residue polypeptide: Phosphatidylinositol 5-phosphate 4-kinase type-2 alpha (405 aa).

An N-acetylalanine modification is found at A2. At T3 the chain carries Phosphothreonine. S14 carries the phosphoserine modification. One can recognise a PIPK domain in the interval 33–405 (ASDPLLSVLM…RFLDFIGHIL (373 aa)). Residues 59–65 (VMLMPDD) form a required for interaction with PIP5K1A region. N6-acetyllysine is present on residues K89 and K145. The segment at 288–328 (QEEVECEENDGEEEGESDSTHPIGTPPDSPGNTLNSSPPLA) is disordered. The span at 289–304 (EEVECEENDGEEEGES) shows a compositional bias: acidic residues.

As to quaternary structure, homodimer. Interacts with PIP4K2B; the interaction may regulate localization to the nucleus. Probably interacts with PIP5K1A; the interaction inhibits PIP5K1A kinase activity. Post-translationally, phosphorylated in tyrosines. Phosphorylation is induced by light and increases kinase activity. In terms of tissue distribution, detected in rod photoreceptor cells.

The protein resides in the cell membrane. Its subcellular location is the nucleus. It is found in the lysosome. It localises to the cytoplasm. The protein localises to the photoreceptor inner segment. The protein resides in the cell projection. Its subcellular location is the cilium. It is found in the photoreceptor outer segment. It carries out the reaction a 1,2-diacyl-sn-glycero-3-phospho-(1D-myo-inositol-5-phosphate) + ATP = a 1,2-diacyl-sn-glycero-3-phospho-(1D-myo-inositol-4,5-bisphosphate) + ADP + H(+). It catalyses the reaction 1,2-dihexadecanoyl-sn-glycero-3-phospho-(1D-myo-inositol-5-phosphate) + ATP = 1,2-dihexadecanoyl-sn-glycero-3-phospho-(1D-myo-inositol-4,5-bisphosphate) + ADP + H(+). The enzyme catalyses 1,2-dihexadecanoyl-sn-glycero-3-phospho-(1D-myo-inositol-5-phosphate) + GTP = 1,2-dihexadecanoyl-sn-glycero-3-phospho-(1D-myo-inositol-4,5-bisphosphate) + GDP + H(+). In rod outer segments, activated by light. Its function is as follows. Catalyzes the phosphorylation of phosphatidylinositol 5-phosphate (PtdIns5P) on the fourth hydroxyl of the myo-inositol ring, to form phosphatidylinositol 4,5-bisphosphate (PtdIns(4,5)P2). Has both ATP- and GTP-dependent kinase activities. May exert its function by regulating the levels of PtdIns5P, which functions in the cytosol by increasing AKT activity and in the nucleus signals through ING2. May regulate the pool of cytosolic PtdIns5P in response to the activation of tyrosine phosphorylation. Required for lysosome-peroxisome membrane contacts and intracellular cholesterol transport through modulating peroxisomal PtdIns(4,5)P2 level. In collaboration with PIP4K2B, has a role in mediating autophagy in times of nutrient stress. Required for autophagosome-lysosome fusion and the regulation of cellular lipid metabolism. Negatively regulates insulin signaling through a catalytic-independent mechanism. PIP4Ks interact with PIP5Ks and suppress PIP5K-mediated PtdIns(4,5)P2 synthesis and insulin-dependent conversion to PtdIns(3,4,5)P3. May be involved in thrombopoiesis, and the terminal maturation of megakaryocytes and regulation of their size. The chain is Phosphatidylinositol 5-phosphate 4-kinase type-2 alpha from Mus musculus (Mouse).